A 285-amino-acid polypeptide reads, in one-letter code: GTP-binding protein 8 (285 aa).

In terms of domain architecture, EngB-type G spans 110–283; that stretch reads QQPEVCFIGR…KCFIADITGS (174 aa). GTP contacts are provided by residues 118–125, 147–151, 165–168, 227–230, and 262–264; these read GRSNVGKS, GHTKK, DMPG, TKID, and ISA. 2 residues coordinate Mg(2+): Ser-125 and Thr-149.

Belongs to the TRAFAC class TrmE-Era-EngA-EngB-Septin-like GTPase superfamily. EngB GTPase family. Requires Mg(2+) as cofactor.

The sequence is that of GTP-binding protein 8 (Gtpbp8) from Mus musculus (Mouse).